Here is a 342-residue protein sequence, read N- to C-terminus: tRNA N6-adenosine threonylcarbamoyltransferase (342 aa).

Residues histidine 111 and histidine 115 each coordinate Fe cation. Residues leucine 134–glycine 138, aspartate 167, glycine 180, and asparagine 277 contribute to the substrate site. Aspartate 305 contacts Fe cation.

It belongs to the KAE1 / TsaD family. Fe(2+) is required as a cofactor.

Its subcellular location is the cytoplasm. It catalyses the reaction L-threonylcarbamoyladenylate + adenosine(37) in tRNA = N(6)-L-threonylcarbamoyladenosine(37) in tRNA + AMP + H(+). Required for the formation of a threonylcarbamoyl group on adenosine at position 37 (t(6)A37) in tRNAs that read codons beginning with adenine. Is involved in the transfer of the threonylcarbamoyl moiety of threonylcarbamoyl-AMP (TC-AMP) to the N6 group of A37, together with TsaE and TsaB. TsaD likely plays a direct catalytic role in this reaction. This chain is tRNA N6-adenosine threonylcarbamoyltransferase, found in Cellvibrio japonicus (strain Ueda107) (Pseudomonas fluorescens subsp. cellulosa).